The chain runs to 100 residues: Putative antiporter subunit mnhF2 (100 aa).

Transmembrane regions (helical) follow at residues 5-25 (ITHI…IICL), 38-60 (VVTF…VLMG), and 70-92 (LIAI…GHVF).

The protein belongs to the CPA3 antiporters (TC 2.A.63) subunit F family. May form a heterooligomeric complex that consists of seven subunits: mnhA2, mnhB2, mnhC2, mnhD2, mnhE2, mnhF2 and mnhG2.

It is found in the cell membrane. The sequence is that of Putative antiporter subunit mnhF2 (mnhF2) from Staphylococcus aureus (strain USA300).